The primary structure comprises 72 residues: Small ribosomal subunit protein bS18c (72 aa).

This sequence belongs to the bacterial ribosomal protein bS18 family. In terms of assembly, part of the 30S ribosomal subunit.

The protein localises to the plastid. Its subcellular location is the chloroplast. The protein is Small ribosomal subunit protein bS18c of Thalassiosira pseudonana (Marine diatom).